The chain runs to 104 residues: Large ribosomal subunit protein uL24 (104 aa).

It belongs to the universal ribosomal protein uL24 family. Part of the 50S ribosomal subunit.

In terms of biological role, one of two assembly initiator proteins, it binds directly to the 5'-end of the 23S rRNA, where it nucleates assembly of the 50S subunit. One of the proteins that surrounds the polypeptide exit tunnel on the outside of the subunit. The sequence is that of Large ribosomal subunit protein uL24 from Citrobacter koseri (strain ATCC BAA-895 / CDC 4225-83 / SGSC4696).